Consider the following 404-residue polypeptide: Phosphoglycerate kinase (404 aa).

Residues 21-23, Arg-38, 61-64, Arg-126, and Arg-159 contribute to the substrate site; these read DFN and HLGR. Residues Lys-210, Glu-333, and 360 to 363 contribute to the ATP site; that span reads GGDS.

Belongs to the phosphoglycerate kinase family. As to quaternary structure, monomer.

The protein resides in the cytoplasm. The enzyme catalyses (2R)-3-phosphoglycerate + ATP = (2R)-3-phospho-glyceroyl phosphate + ADP. It functions in the pathway carbohydrate degradation; glycolysis; pyruvate from D-glyceraldehyde 3-phosphate: step 2/5. The protein is Phosphoglycerate kinase of Acidobacterium capsulatum (strain ATCC 51196 / DSM 11244 / BCRC 80197 / JCM 7670 / NBRC 15755 / NCIMB 13165 / 161).